We begin with the raw amino-acid sequence, 341 residues long: HTH-type transcriptional repressor PurR (341 aa).

An HTH lacI-type domain is found at 2 to 56; that stretch reads ATIKDVAKRAGVSTTTVSHVINKTRFVAENTRAAVWAAIKELNYSPSAVARSLKV. Residues 4–23 constitute a DNA-binding region (H-T-H motif); that stretch reads IKDVAKRAGVSTTTVSHVIN. A DNA-binding region spans residues 48 to 56; that stretch reads SAVARSLKV. Residues Y73, R190, T192, F221, and D275 each contribute to the hypoxanthine site.

In terms of assembly, homodimer.

Its pathway is purine metabolism; purine nucleotide biosynthesis [regulation]. Its function is as follows. Is the main repressor of the genes involved in the de novo synthesis of purine nucleotides, regulating purB, purC, purEK, purF, purHD, purL, purMN and guaBA expression. PurR is allosterically activated to bind its cognate DNA by binding the purine corepressors, hypoxanthine or guanine, thereby effecting transcription repression. The chain is HTH-type transcriptional repressor PurR from Proteus mirabilis (strain HI4320).